The sequence spans 735 residues: MLKLFSAFRKDKIWDFDGGIHPPEMKTQSNGTPLRQVPLAPRFVIPLKQHIGAEGELCVSVGDRVLRGQALTRGRGRMLPVHAPTSGTVIAIAPHSTAHPSALAELSVIIDADGEDRWIEREGWSDYRAHSREALIERIHQYGVAGLGGAGFPTGVKLQGGGDKITTLIINAAECEPYITADDRLMQDCAAQIVEGIRILAHILQPREVLIGIEDNKPQAISMLRAVLADAHDISLRVIPTKYPSGGAKQLTQILTGKQVPHGGRSSDIGVLMQNVGTAYAVKRAVVDGEPITERVVTLTGEAVSRPGNVWARLGTPVRHLLNDAGFCPSADQMVIMGGPLMGFTLPWLDVPVVKITNCLLAPSVTEMGAPQEEKSCIRCSACADACPADLLPQQLYWFSKGQQHDKATAHHIADCIECGACAWVCPSNIPLVQYFRQEKAEINAIRLEEKRAAEAKARFEARQARLEREKAVRLARHKSAAVQPAAKDQDAIAAALARVKEKQAQATQPVVIQAGSLPDNSAVIAAREARKAQARAKQAAHPVADSALPGDDPRKAAVEAAIARAKARKQEQQAGSEPAEPVDPRKAAVEAAIARAKARKQEQQAGSEPVEAVDPRKAAVEAAIARAKARKQEQQAGGEPAEAVDPRKAAVEAAIARAKARKQEQQAGSEPAEPAAPRKAAVEAAIARAKARKQEQQAGSEPAEAVDPRKAAVAAAIARVQAKKAAQQQVVNED.

2 consecutive 4Fe-4S ferredoxin-type domains span residues 368-397 (MGAPQEEKSCIRCSACADACPADLLPQQLY) and 407-436 (KATAHHIADCIECGACAWVCPSNIPLVQYF). The [4Fe-4S] cluster site is built by cysteine 377, cysteine 380, cysteine 383, cysteine 387, cysteine 416, cysteine 419, cysteine 422, and cysteine 426. The segment at 534–715 (QARAKQAAHP…AVDPRKAAVA (182 aa)) is disordered. Residues 666-689 (QQAGSEPAEPAAPRKAAVEAAIAR) show a composition bias toward low complexity.

Belongs to the 4Fe4S bacterial-type ferredoxin family. RnfC subfamily. In terms of assembly, the complex is composed of six subunits: RsxA, RsxB, RsxC, RsxD, RsxE and RsxG. Requires [4Fe-4S] cluster as cofactor.

The protein localises to the cell inner membrane. In terms of biological role, part of a membrane-bound complex that couples electron transfer with translocation of ions across the membrane. Required to maintain the reduced state of SoxR. This chain is Ion-translocating oxidoreductase complex subunit C, found in Salmonella paratyphi B (strain ATCC BAA-1250 / SPB7).